Reading from the N-terminus, the 243-residue chain is Zinc import ATP-binding protein ZnuC 2 (243 aa).

Positions 3-218 constitute an ABC transporter domain; that stretch reads LSLHQLSVKF…PEYKVLFGLD (216 aa). 35-42 provides a ligand contact to ATP; the sequence is GPNGSGKS.

Belongs to the ABC transporter superfamily. Zinc importer (TC 3.A.1.15.5) family. In terms of assembly, the complex is composed of two ATP-binding proteins (ZnuC), two transmembrane proteins (ZnuB) and a solute-binding protein (ZnuA).

Its subcellular location is the cell inner membrane. It catalyses the reaction Zn(2+)(out) + ATP(in) + H2O(in) = Zn(2+)(in) + ADP(in) + phosphate(in) + H(+)(in). Part of the ABC transporter complex ZnuABC involved in zinc import. Responsible for energy coupling to the transport system. This chain is Zinc import ATP-binding protein ZnuC 2, found in Aliivibrio fischeri (strain ATCC 700601 / ES114) (Vibrio fischeri).